A 265-amino-acid polypeptide reads, in one-letter code: Esterase claE (265 aa).

Active-site charge relay system residues include serine 121, aspartate 211, and histidine 239.

It belongs to the LovG family.

The protein operates within secondary metabolite biosynthesis. Its function is as follows. Esterase; part of the cla gene cluster that produces clavatol and ortho-quinone methide. The clavatol biosynthesis cluster cla and the terrestric acid cluster tra are both involved in the production of peniphenones and penilactones. The non-reducing PKS claF is responsible for the formation of clavatol from successive condensations of 3 malonyl-CoA units, presumably with a simple acetyl-CoA starter unit, and 2 methylation steps. The esterase claE probably collaborates with claF by catalyzing the hydrolysis of ACP-bound acyl intermediates to free the ACP from stalled intermediates. The clavatol oxidase claD then converts clavatol to hydroxyclavatol. Spontaneous dehydration of hydroxyclavatol leads to the accumulation of the highly active ortho-quinone methide. On the other hand, the PKS-NRPS hybrid traA is involved in the formation of crustosic acid, with the help of traB and traD. The polyketide synthase module (PKS) of traA is responsible for the synthesis of the polyketide backbone via the condensation of an acetyl-CoA starter unit with 3 malonyl-CoA units. The downstream nonribosomal peptide synthetase (NRPS) module then amidates the carboxyl end of the polyketide with L-malic acid. Because traA lacks a designated enoylreductase (ER) domain, the required activity is provided the enoyl reductase traG. Crustosic acid undergoes decarboxylation and isomerization to the terrestric acid, catalyzed by the 2-oxoglutarate-dependent dioxygenase traH. Both acids are further converted to the 2 gamma-butyrolactones (R)-5-methyltetronic acid and (S)-5-carboxylmethyltetronic acid, with involvement of the cytochrome P450 monooxygenase claJ. Spontaneous addition of the methide to these gamma-butyrolactones leads to peniphenone D and penilactone D, which undergo again stereospecific attacking by methide to give penilactones A and B. This Penicillium crustosum (Blue mold fungus) protein is Esterase claE.